The sequence spans 293 residues: Forkhead box protein N5 (293 aa).

Positions 104-152 (TSPPLQLQRQLSNDYSTVEDSEDEAPTSCSDVLTDDDDSYNPWQPKHKR) are disordered. Residues 106 to 119 (PPLQLQRQLSNDYS) show a composition bias toward polar residues. A DNA-binding region (fork-head) is located at residues 176–273 (RPPLNYCNLI…NEMHALSDDL (98 aa)).

It is found in the nucleus. The chain is Forkhead box protein N5 from Xenopus tropicalis (Western clawed frog).